We begin with the raw amino-acid sequence, 215 residues long: Glutathione S-transferase-like protein (215 aa).

Residues 1–76 (MPNARILKIQ…YVAASGPAAP (76 aa)) form the GST N-terminal domain. Residues 82–215 (NVAEQAAVRQ…LVAVRKEASV (134 aa)) enclose the GST C-terminal domain.

The protein belongs to the GST superfamily.

The chain is Glutathione S-transferase-like protein from Aspergillus aculeatus (strain ATCC 16872 / CBS 172.66 / WB 5094).